The chain runs to 466 residues: ATP synthase subunit beta (466 aa).

An ATP-binding site is contributed by 156–163 (GGAGVGKT).

Belongs to the ATPase alpha/beta chains family. In terms of assembly, F-type ATPases have 2 components, CF(1) - the catalytic core - and CF(0) - the membrane proton channel. CF(1) has five subunits: alpha(3), beta(3), gamma(1), delta(1), epsilon(1). CF(0) has three main subunits: a(1), b(2) and c(9-12). The alpha and beta chains form an alternating ring which encloses part of the gamma chain. CF(1) is attached to CF(0) by a central stalk formed by the gamma and epsilon chains, while a peripheral stalk is formed by the delta and b chains.

The protein resides in the cell inner membrane. It catalyses the reaction ATP + H2O + 4 H(+)(in) = ADP + phosphate + 5 H(+)(out). Produces ATP from ADP in the presence of a proton gradient across the membrane. The catalytic sites are hosted primarily by the beta subunits. The protein is ATP synthase subunit beta of Polynucleobacter necessarius subsp. necessarius (strain STIR1).